A 547-amino-acid polypeptide reads, in one-letter code: Chaperonin GroEL 1 (547 aa).

Residues 30–33 (TLGP), Lys51, 87–91 (DGTTT), Gly415, and Asp496 contribute to the ATP site.

The protein belongs to the chaperonin (HSP60) family. As to quaternary structure, forms a cylinder of 14 subunits composed of two heptameric rings stacked back-to-back. Interacts with the co-chaperonin GroES.

It localises to the cytoplasm. It carries out the reaction ATP + H2O + a folded polypeptide = ADP + phosphate + an unfolded polypeptide.. In terms of biological role, together with its co-chaperonin GroES, plays an essential role in assisting protein folding. The GroEL-GroES system forms a nano-cage that allows encapsulation of the non-native substrate proteins and provides a physical environment optimized to promote and accelerate protein folding. The protein is Chaperonin GroEL 1 of Rhodopseudomonas palustris (strain BisA53).